A 320-amino-acid chain; its full sequence is Cytochrome c biogenesis protein CcsA (320 aa).

A run of 7 helical transmembrane segments spans residues 14-34 (VLLLGLAAFALLLTALPWCFW), 68-88 (GHFPISNLYESLCFLAWACTL), 101-121 (LVAASATPMGLGCIAFASFAL), 146-166 (VIMVSYAALLVGSLLSVAVLM), 226-246 (TITVGFLLLTVGIISGAVWAN), 260-277 (TWALICWLVYAAYLHTRL), and 289-309 (VASLGLVVIVVCYIGVNLLGI).

Belongs to the CcmF/CycK/Ccl1/NrfE/CcsA family. As to quaternary structure, may interact with ccs1.

It localises to the cellular thylakoid membrane. Functionally, required during biogenesis of c-type cytochromes (cytochrome c6 and cytochrome f) at the step of heme attachment. This is Cytochrome c biogenesis protein CcsA from Synechococcus sp. (strain WH7803).